The sequence spans 84 residues: Putative membrane protein insertion efficiency factor (84 aa).

A disordered region spans residues S61–K84. The span at T72–K84 shows a compositional bias: polar residues.

The protein belongs to the UPF0161 family.

The protein localises to the cell inner membrane. Functionally, could be involved in insertion of integral membrane proteins into the membrane. In Leptospira borgpetersenii serovar Hardjo-bovis (strain JB197), this protein is Putative membrane protein insertion efficiency factor.